A 303-amino-acid chain; its full sequence is ATP synthase subunit a (303 aa).

The next 6 helical transmembrane spans lie at 59-79, 122-142, 148-168, 181-201, 220-240, and 244-264; these read HTVMMWLAALLLMATLFIWGN, FLLTVFFFILFMNMLGMVPWM, NLAVTMALALCTFVITQVAGI, TGGVAPWLWPIMVPVEVLGLF, IVYFFLLGLIFLLGHPAVAAV, and FAFAIFLLELFVAFVQAYVFA. Residues 281-290 are compositionally biased toward basic and acidic residues; that stretch reads HDDHGHDHPE. A disordered region spans residues 281-303; the sequence is HDDHGHDHPEAGPSHDQGKAHHA.

It belongs to the ATPase A chain family. In terms of assembly, F-type ATPases have 2 components, CF(1) - the catalytic core - and CF(0) - the membrane proton channel. CF(1) has five subunits: alpha(3), beta(3), gamma(1), delta(1), epsilon(1). CF(0) has three main subunits: a(1), b(2) and c(9-12). The alpha and beta chains form an alternating ring which encloses part of the gamma chain. CF(1) is attached to CF(0) by a central stalk formed by the gamma and epsilon chains, while a peripheral stalk is formed by the delta and b chains.

It localises to the cell inner membrane. Functionally, key component of the proton channel; it plays a direct role in the translocation of protons across the membrane. The sequence is that of ATP synthase subunit a from Myxococcus xanthus (strain DK1622).